A 146-amino-acid chain; its full sequence is Catabolic 3-dehydroquinase (146 aa).

Y24 (proton acceptor) is an active-site residue. Substrate-binding residues include N78, H84, and D91. H104 functions as the Proton donor in the catalytic mechanism. Substrate contacts are provided by residues 105–106 (IT) and R115.

This sequence belongs to the type-II 3-dehydroquinase family. In terms of assembly, homododecamer. Adopts a ring-like structure, composed of an arrangement of two hexameric rings stacked on top of one another.

The enzyme catalyses 3-dehydroquinate = 3-dehydroshikimate + H2O. It functions in the pathway aromatic compound metabolism; 3,4-dihydroxybenzoate biosynthesis; 3,4-dihydroxybenzoate from 3-dehydroquinate: step 1/2. Its function is as follows. Is involved in the catabolism of quinate. Allows the utilization of quinate as carbon source via the beta-ketoadipate pathway. This Candida albicans (strain SC5314 / ATCC MYA-2876) (Yeast) protein is Catabolic 3-dehydroquinase.